The sequence spans 219 residues: Orotate phosphoribosyltransferase (219 aa).

Lys26 contributes to the 5-phospho-alpha-D-ribose 1-diphosphate binding site. 34–35 contacts orotate; it reads FF. 5-phospho-alpha-D-ribose 1-diphosphate-binding positions include 72–73, Arg98, Lys99, Lys102, His104, and 124–132; these read YK and DDVITAGTA. Positions 128 and 156 each coordinate orotate.

The protein belongs to the purine/pyrimidine phosphoribosyltransferase family. PyrE subfamily. In terms of assembly, homodimer. Mg(2+) is required as a cofactor.

It catalyses the reaction orotidine 5'-phosphate + diphosphate = orotate + 5-phospho-alpha-D-ribose 1-diphosphate. It participates in pyrimidine metabolism; UMP biosynthesis via de novo pathway; UMP from orotate: step 1/2. Its function is as follows. Catalyzes the transfer of a ribosyl phosphate group from 5-phosphoribose 1-diphosphate to orotate, leading to the formation of orotidine monophosphate (OMP). In Xylella fastidiosa (strain 9a5c), this protein is Orotate phosphoribosyltransferase.